Here is a 180-residue protein sequence, read N- to C-terminus: Calcineurin subunit B type 1 (180 aa).

Glycine 2 carries the N-myristoyl glycine lipid modification. EF-hand domains lie at 25-60 (AELK…ALNP), 62-92 (LERV…LSHK), 94-129 (TKED…MVGT), and 135-170 (QLQQ…QEGI). Ca(2+)-binding residues include aspartate 38, aspartate 40, serine 42, threonine 44, glutamate 49, aspartate 70, asparagine 72, aspartate 74, glutamate 76, glutamate 81, aspartate 107, aspartate 109, aspartate 111, and glutamate 118. The tract at residues 138–143 (QIVDKT) is canA/calcineurin A binding. The Ca(2+) site is built by aspartate 148, aspartate 150, aspartate 152, lysine 154, and glutamate 159.

It belongs to the calcineurin regulatory subunit family. In terms of assembly, forms a complex composed of a calmodulin-dependent catalytic subunit canA (also known as calcineurin A) and a regulatory Ca(2+)-binding subunit cnbA (also known as calcineurin B).

In terms of biological role, regulatory subunit of calcineurin, a calcium-dependent, calmodulin stimulated protein phosphatase. Confers calcium sensitivity. Important for stalk formation. The sequence is that of Calcineurin subunit B type 1 (cnbA) from Dictyostelium discoideum (Social amoeba).